The sequence spans 417 residues: uncharacterized protein (417 aa).

2 disordered regions span residues 1 to 41 (MDSE…EDQA) and 233 to 262 (QDSAYNDQAPSTSYHHHHHEQLEAGKSTRS). Basic and acidic residues predominate over residues 31–41 (DEDHIFHEDQA). Positions 235–245 (SAYNDQAPSTS) are enriched in polar residues.

This is an uncharacterized protein from Caenorhabditis elegans.